We begin with the raw amino-acid sequence, 395 residues long: MASLRLPAQLVTRGNLIHHNSSSSSSGRLSWRRSLTPENTIPLFPSSSSSSLNRERSIVVPVTCSAAAVNLAPGTPVRPTSILVVGATGTLGRQIVRRALDEGYDVRCLVRPRPAPADFLRDWGATVVNADLSKPETIPATLVGIHTVIDCATGRPEEPIKTVDWEGKVALIQCAKAMGIQKYVFYSIHNCDKHPEVPLMEIKYCTEKFLQESGLNHITIRLCGFMQGLIGQYAVPILEEKSVWGTDAPTRVAYMDTQDIARLTLIALRNEKINGKLLTFAGPRAWTTQEVITLCERLAGQDANVTTVPVSVLRVTRQLTRFFQWTNDVADRLAFSEVLSSDTVFSAPMTETNSLLGVDQKDMVTLEKYLQDYFSNILKKLKDLKAQSKQSDIYF.

The transit peptide at 1-64 (MASLRLPAQL…ERSIVVPVTC (64 aa)) directs the protein to the chloroplast.

This sequence belongs to the NmrA-type oxidoreductase family. Component of a high molecular weight complex containing OHP1, OHP2 and HCF244, and PSII core proteins D1/D2, HCF136 and HCF173. Interacts with OHP1. Forms a trimeric complex with OHP1 and OHP2 that mutually stabilizes each subunit.

Its subcellular location is the plastid. It localises to the chloroplast stroma. The protein resides in the chloroplast thylakoid membrane. Its function is as follows. Auxiliary factor required, together with HCF173, for the biogenesis of photosystem II (PSII), especially for the synthesis of the reaction center proteins (e.g. D1), via the regulation of the corresponding mRNA (e.g. psbA) translation initiation (ribosomal loading) and stabilization. Forms a trimeric complex with OHP1 and OHP2 that is required to promote PSII core subunit assembly. The trimeric complex forms a transient PSII reaction center-like complex with PsbA, PsbD, PsbE, PsbF and PsbI subunits in thylakoids for early assembly of PSII as well as PSII repair. The trimeric complex is required for the recruitment of ribosomes to the psbA mRNA during PSII biogenesis and repair. The polypeptide is Protein HIGH CHLOROPHYLL FLUORESCENCE PHENOTYPE 244, chloroplastic (Arabidopsis thaliana (Mouse-ear cress)).